The chain runs to 787 residues: Lon protease (787 aa).

A Lon N-terminal domain is found at 12–210 (LPLIPLRGLA…LIYSILLEEI (199 aa)). 362–369 (GPPGTGKT) provides a ligand contact to ATP. The Lon proteolytic domain occupies 599–780 (NPQIGLVNGL…DEVLEQALLK (182 aa)). Residues Ser-686 and Lys-729 contribute to the active site.

This sequence belongs to the peptidase S16 family. In terms of assembly, homohexamer. Organized in a ring with a central cavity.

It is found in the cytoplasm. The catalysed reaction is Hydrolysis of proteins in presence of ATP.. ATP-dependent serine protease that mediates the selective degradation of mutant and abnormal proteins as well as certain short-lived regulatory proteins. Required for cellular homeostasis and for survival from DNA damage and developmental changes induced by stress. Degrades polypeptides processively to yield small peptide fragments that are 5 to 10 amino acids long. Binds to DNA in a double-stranded, site-specific manner. This is Lon protease from Clostridioides difficile (strain 630) (Peptoclostridium difficile).